Here is a 108-residue protein sequence, read N- to C-terminus: uncharacterized protein (108 aa).

The N-terminal stretch at 1-21 (MFRSLFLAAALMAFTPLAANA) is a signal peptide.

It to E.coli YaaX.

This is an uncharacterized protein from Escherichia coli O157:H7.